Here is a 582-residue protein sequence, read N- to C-terminus: Probable DNA ligase (582 aa).

Glu-248 is a binding site for ATP. The N6-AMP-lysine intermediate role is filled by Lys-250. Residues Arg-255, Arg-270, Glu-299, Phe-339, Arg-416, and Lys-422 each contribute to the ATP site.

It belongs to the ATP-dependent DNA ligase family. The cofactor is Mg(2+).

The enzyme catalyses ATP + (deoxyribonucleotide)n-3'-hydroxyl + 5'-phospho-(deoxyribonucleotide)m = (deoxyribonucleotide)n+m + AMP + diphosphate.. In terms of biological role, DNA ligase that seals nicks in double-stranded DNA during DNA replication, DNA recombination and DNA repair. In Persephonella marina (strain DSM 14350 / EX-H1), this protein is Probable DNA ligase.